Here is a 184-residue protein sequence, read N- to C-terminus: TATA-box-binding protein (184 aa).

2 repeat units span residues 9-85 (IENI…IDKL) and 100-178 (VQNI…KKEL).

The protein belongs to the TBP family.

General factor that plays a role in the activation of archaeal genes transcribed by RNA polymerase. Binds specifically to the TATA box promoter element which lies close to the position of transcription initiation. The chain is TATA-box-binding protein from Thermoplasma volcanium (strain ATCC 51530 / DSM 4299 / JCM 9571 / NBRC 15438 / GSS1).